The following is a 198-amino-acid chain: Transcription factor LBX2 (198 aa).

Disordered stretches follow at residues 24-46, 63-89, and 173-198; these read MVPR…SPLC, ALQP…RKSR, and DPGL…QVDD. A DNA-binding region (homeobox) is located at residues 85–144; that stretch reads RRKSRTAFTAQQVLELERRFVFQKYLAPSERDGLATRLGLANAQVVTWFQNRRAKLKRDV.

It localises to the nucleus. Its function is as follows. Transcription factor. The polypeptide is Transcription factor LBX2 (LBX2) (Homo sapiens (Human)).